A 266-amino-acid chain; its full sequence is Electron transfer flavoprotein subunit beta (266 aa).

It belongs to the ETF beta-subunit/FixA family. Heterodimer of an alpha and a beta subunit. FAD serves as cofactor. It depends on AMP as a cofactor.

The electron transfer flavoprotein serves as a specific electron acceptor for other dehydrogenases. It transfers the electrons to the main respiratory chain via ETF-ubiquinone oxidoreductase (ETF dehydrogenase). The chain is Electron transfer flavoprotein subunit beta (etfB) from Mycobacterium bovis (strain ATCC BAA-935 / AF2122/97).